The sequence spans 424 residues: Homoserine O-succinyltransferase (424 aa).

Residues 67-381 (NAVLVCHALN…PHGHDAFLLD (315 aa)) form the AB hydrolase-1 domain. Catalysis depends on Ser-173, which acts as the Nucleophile. Arg-243 provides a ligand contact to substrate. Residues Asp-342 and His-375 contribute to the active site. Position 376 (Asp-376) interacts with substrate.

The protein belongs to the AB hydrolase superfamily. MetX family. In terms of assembly, homodimer.

It localises to the cytoplasm. The catalysed reaction is L-homoserine + succinyl-CoA = O-succinyl-L-homoserine + CoA. It functions in the pathway amino-acid biosynthesis; L-methionine biosynthesis via de novo pathway; O-succinyl-L-homoserine from L-homoserine: step 1/1. In terms of biological role, transfers a succinyl group from succinyl-CoA to L-homoserine, forming succinyl-L-homoserine. In vitro, also has serine succinyl transferase activity. The protein is Homoserine O-succinyltransferase of Bordetella petrii (strain ATCC BAA-461 / DSM 12804 / CCUG 43448).